Reading from the N-terminus, the 430-residue chain is Dihydroorotase (430 aa).

Residues His-61 and His-63 each contribute to the Zn(2+) site. Residues 63–65 (HLR) and Asn-95 contribute to the substrate site. Positions 153, 180, and 233 each coordinate Zn(2+). Residue Asn-279 coordinates substrate. Zn(2+) is bound at residue Asp-306. Asp-306 is an active-site residue. Substrate-binding positions include His-310 and 324–325 (FG).

This sequence belongs to the metallo-dependent hydrolases superfamily. DHOase family. Class I DHOase subfamily. The cofactor is Zn(2+).

It catalyses the reaction (S)-dihydroorotate + H2O = N-carbamoyl-L-aspartate + H(+). It participates in pyrimidine metabolism; UMP biosynthesis via de novo pathway; (S)-dihydroorotate from bicarbonate: step 3/3. Functionally, catalyzes the reversible cyclization of carbamoyl aspartate to dihydroorotate. This Lactiplantibacillus plantarum (strain ATCC BAA-793 / NCIMB 8826 / WCFS1) (Lactobacillus plantarum) protein is Dihydroorotase.